The chain runs to 601 residues: Serine/threonine-protein phosphatase 2A 65 kDa regulatory subunit A beta isoform (601 aa).

The residue at position 2 (Ala-2) is an N-acetylalanine. HEAT repeat units lie at residues 20–58 (DSLYPIAVLIDELRNEDVQLRLNSIKKLSTIALALGVER), 59–96 (TRSELLPFLTDTIYDEDEVLLALAEQLGNFTGLVGGPD), 97–135 (FAHCLLPPLENLATVEETVVRDKAVESLRQISQEHTPVA), 136–173 (LEAYFVPLVKRLASGDWFTSRTSACGLFSVCYPRASNA), 174–212 (VKAEIRQQFRSLCSDDTPMVRRAAASKLGEFAKVLELDS), 213–251 (VKSEIVPLFTSLASDEQDSVRLLAVEACVSIAQLLSQDD), 252–290 (LETLVMPTLRQAAEDKSWRVRYMVADRFSELQKAMGPKI), 291–333 (TLND…RETI), 334–372 (IMNQILPYIKELVSDTNQHVKSALASVIMGLSTILGKEN), 373–411 (TIEHLLPLFLAQLKDECPDVRLNIISNLDCVNEVIGIRQ), 412–450 (LSQSLLPAIVELAEDAKWRVRLAIIEYMPLLAGQLGVEF), 451–489 (FDEKLNSLCMAWLVDHVYAIREAATNNLMKLVQKFGTEW), 490–528 (AQNTIVPKVLVMANDPNYLHRMTTLFCINALSEACGQEI), 529–567 (TTKQMLPIVLKMAGDQVANVRFNVAKSLQKIGPILDTNA), and 568–601 (LQGEVKPVLQKLGQDEDMDVKYFAQEAISVLALA).

This sequence belongs to the phosphatase 2A regulatory subunit A family. In terms of assembly, PP2A consists of a common heterodimeric core enzyme, composed of a 36 kDa catalytic subunit (subunit C) and a 65 kDa constant regulatory subunit (PR65 or subunit A), that associates with a variety of regulatory subunits. Proteins that associate with the core dimer include three families of regulatory subunits B (the R2/B/PR55/B55, R3/B''/PR72/PR130/PR59 and R5/B'/B56 families), the 48 kDa variable regulatory subunit, viral proteins, and cell signaling molecules. Interacts with IPO9. Interacts with SGO1. Interacts with RAF1.

The PR65 subunit of protein phosphatase 2A serves as a scaffolding molecule to coordinate the assembly of the catalytic subunit and a variable regulatory B subunit. The sequence is that of Serine/threonine-protein phosphatase 2A 65 kDa regulatory subunit A beta isoform (PPP2R1B) from Homo sapiens (Human).